A 293-amino-acid polypeptide reads, in one-letter code: uncharacterized protein (293 aa).

Glutamate 47 is a catalytic residue.

Belongs to the PhzF family.

This is an uncharacterized protein from Bacillus subtilis (strain 168).